Consider the following 205-residue polypeptide: DNA-directed RNA polymerases IV and V subunit 4 (205 aa).

The disordered stretch occupies residues 1 to 79 (MSEKGGKGLK…TKSSKNSLHS (79 aa)). The span at 48–60 (NVSSDQQPFQSSA) shows a compositional bias: polar residues.

This sequence belongs to the eukaryotic RPB4 RNA polymerase subunit family. Component of the RNA polymerase IV and V complexes. Interacts with NRPD1 and NRPE1. As to expression, expressed in shoot meristematic region and in root tips. Detected in cotyledons, flowers and young leaves.

It localises to the nucleus. Its function is as follows. DNA-dependent RNA polymerase catalyzes the transcription of DNA into RNA using the four ribonucleoside triphosphates as substrates. Component of RNA polymerases IV and V which mediate short-interfering RNAs (siRNA) accumulation and subsequent RNA-directed DNA methylation-dependent (RdDM) transcriptional gene silencing (TGS) of endogenous repeated sequences, including transposable elements. Required for the de novo DNA methylation directed by the RdDM pathway. This Arabidopsis thaliana (Mouse-ear cress) protein is DNA-directed RNA polymerases IV and V subunit 4 (NRPD4).